Reading from the N-terminus, the 222-residue chain is Interleukin-12 subunit alpha (222 aa).

The N-terminal stretch at M1–A25 is a signal peptide. 3 disulfides stabilise this stretch: C40-C113, C67-C199, and C88-C126. N96 and N174 each carry an N-linked (GlcNAc...) asparagine glycan.

The protein belongs to the IL-6 superfamily. Heterodimer with IL12B; disulfide-linked. This heterodimer is known as interleukin IL-12. Heterodimer with EBI3/IL27B; not disulfide-linked. This heterodimer is known as interleukin IL-35. Interacts with NBR1; this interaction promotes IL-12 secretion.

Its subcellular location is the secreted. Heterodimerizes with IL12B to form the IL-12 cytokine or with EBI3/IL27B to form the IL-35 cytokine. IL-12 is primarily produced by professional antigen-presenting cells (APCs) such as B-cells and dendritic cells (DCs) as well as macrophages and granulocytes and regulates T-cell and natural killer-cell responses, induces the production of interferon-gamma (IFN-gamma), favors the differentiation of T-helper 1 (Th1) cells and is an important link between innate resistance and adaptive immunity. Mechanistically, exerts its biological effects through a receptor composed of IL12R1 and IL12R2 subunits. Binding to the receptor results in the rapid tyrosine phosphorylation of a number of cellular substrates including the JAK family kinases TYK2 and JAK2. In turn, recruited STAT4 gets phosphorylated and translocates to the nucleus where it regulates cytokine/growth factor responsive genes. As part of IL-35, plays essential roles in maintaining the immune homeostasis of the liver microenvironment and also functions as an immune-suppressive cytokine. Mediates biological events through unconventional receptors composed of IL12RB2 and gp130/IL6ST heterodimers or homodimers. Signaling requires the transcription factors STAT1 and STAT4, which form a unique heterodimer that binds to distinct DNA sites. This chain is Interleukin-12 subunit alpha (IL12A), found in Lama glama (Llama).